A 94-amino-acid polypeptide reads, in one-letter code: Conotoxin Gla-MrII (94 aa).

The first 25 residues, 1–25 (MFGHTSVSFLLLSIVALGMVATVIC), serve as a signal peptide directing secretion. 5 positions are modified to 4-carboxyglutamate: Glu30, Glu34, Glu37, Glu40, and Glu41. A propeptide spanning residues 78 to 94 (STHMQKRFLRMPRDLAD) is cleaved from the precursor.

It belongs to the conotoxin I2 superfamily. In terms of processing, contains 4 disulfide bonds. In terms of tissue distribution, expressed by the venom duct.

Its subcellular location is the secreted. The polypeptide is Conotoxin Gla-MrII (Conus marmoreus (Marble cone)).